Consider the following 379-residue polypeptide: Botryococcene C-methyltransferase (379 aa).

Residues 17–37 form a helical membrane-spanning segment; the sequence is LLTWKGAAGLAAAVALGYIII.

Belongs to the class I-like SAM-binding methyltransferase superfamily. Erg6/SMT family.

The protein localises to the microsome membrane. The catalysed reaction is C30 botryococcene + 2 S-adenosyl-L-methionine = 3,20-dimethyl-1,2,21,22-tetradehydro-2,3,20,21-tetrahydrobotryococcene + 2 S-adenosyl-L-homocysteine + 2 H(+). In terms of biological role, converts botryococcene to mono- and dimethyl derivatives, but not to tri- and tetramethylated products. Unable to methylate cycloartenol, zymosterol or lanosterol, but can also use squalene as substrate. Methylates both C-3 and C22 positions, but only C-3 position in monomethylated squalenes. In contrast, monomethylated botryococcene occured mainly at the C-20 position yielding showacene, but also at the C-3 position yielding isoshowacene. This chain is Botryococcene C-methyltransferase (TMT-3), found in Botryococcus braunii (Green alga).